The primary structure comprises 491 residues: Protein nucleotidyltransferase YdiU (491 aa).

ATP-binding residues include glycine 94, glycine 96, arginine 97, lysine 117, aspartate 129, glycine 130, arginine 180, and arginine 187. Residue aspartate 256 is the Proton acceptor of the active site. Mg(2+)-binding residues include asparagine 257 and aspartate 266. Aspartate 266 is an ATP binding site.

It belongs to the SELO family. It depends on Mg(2+) as a cofactor. Mn(2+) is required as a cofactor.

It catalyses the reaction L-seryl-[protein] + ATP = 3-O-(5'-adenylyl)-L-seryl-[protein] + diphosphate. The enzyme catalyses L-threonyl-[protein] + ATP = 3-O-(5'-adenylyl)-L-threonyl-[protein] + diphosphate. It carries out the reaction L-tyrosyl-[protein] + ATP = O-(5'-adenylyl)-L-tyrosyl-[protein] + diphosphate. The catalysed reaction is L-histidyl-[protein] + UTP = N(tele)-(5'-uridylyl)-L-histidyl-[protein] + diphosphate. It catalyses the reaction L-seryl-[protein] + UTP = O-(5'-uridylyl)-L-seryl-[protein] + diphosphate. The enzyme catalyses L-tyrosyl-[protein] + UTP = O-(5'-uridylyl)-L-tyrosyl-[protein] + diphosphate. Its function is as follows. Nucleotidyltransferase involved in the post-translational modification of proteins. It can catalyze the addition of adenosine monophosphate (AMP) or uridine monophosphate (UMP) to a protein, resulting in modifications known as AMPylation and UMPylation. The chain is Protein nucleotidyltransferase YdiU from Brevibacillus brevis (strain 47 / JCM 6285 / NBRC 100599).